A 445-amino-acid chain; its full sequence is Phosphoglucosamine mutase 1 (445 aa).

Ser-102 functions as the Phosphoserine intermediate in the catalytic mechanism. Residues Ser-102, Asp-241, Asp-243, and Asp-245 each coordinate Mg(2+). Ser-102 is modified (phosphoserine).

Belongs to the phosphohexose mutase family. Requires Mg(2+) as cofactor. Activated by phosphorylation.

It catalyses the reaction alpha-D-glucosamine 1-phosphate = D-glucosamine 6-phosphate. Its function is as follows. Catalyzes the conversion of glucosamine-6-phosphate to glucosamine-1-phosphate. The chain is Phosphoglucosamine mutase 1 from Shewanella baltica (strain OS185).